Here is a 1096-residue protein sequence, read N- to C-terminus: Lysine-specific demethylase PHF2 (1096 aa).

The PHD-type zinc-finger motif lies at 5–56 (PVYCVCRLPYDVTRFMIECDACKDWFHGSCVGVEEEEAPDIDIYHCPNCEKT). Residues threonine 193 and threonine 246 each contribute to the 2-oxoglutarate site. In terms of domain architecture, JmjC spans 197–353 (FSDTRMSSFV…MQMRAYEVER (157 aa)). The Fe cation site is built by histidine 249 and aspartate 251. The 2-oxoglutarate site is built by tyrosine 259, lysine 266, tyrosine 321, and threonine 323. Tyrosine 321 lines the Fe cation pocket. 2 disordered regions span residues 447-634 (KAVR…KDNK) and 646-674 (GSKA…KPVR). Serine 474 is modified (phosphoserine). Phosphothreonine is present on threonine 479. Residues 503 to 518 (SKIPKPPKPPKPPRPP) are compositionally biased toward pro residues. Serine 539 carries the post-translational modification Phosphoserine. Composition is skewed to basic and acidic residues over residues 548 to 563 (LEAH…EPPK) and 578 to 624 (DVVH…KLEK). Residue serine 655 is modified to Phosphoserine. Over residues 665–674 (FKEDKPKPVR) the composition is skewed to basic and acidic residues. Phosphoserine is present on residues serine 681 and serine 705. Lysine 711 participates in a covalent cross-link: Glycyl lysine isopeptide (Lys-Gly) (interchain with G-Cter in SUMO2). Disordered regions lie at residues 719-799 (TKPK…QGML), 817-846 (AGQA…KRLL), and 877-1078 (YPSL…MATA). Lysine 720 is modified (N6-acetyllysine). Tyrosine 728 is subject to Phosphotyrosine. Over residues 729–757 (KSDDSSDEGSLHIDTDTKPGRNARVKKES) the composition is skewed to basic and acidic residues. Residues serine 730, serine 733, serine 734, and serine 738 each carry the phosphoserine modification. 3 positions are modified to phosphoserine: serine 879, serine 882, and serine 899. The span at 916 to 925 (RQDRPVREGT) shows a compositional bias: basic and acidic residues. Positions 949-959 (SKKKKSAKRKL) are enriched in basic residues. Low complexity-rich tracts occupy residues 960–1009 (TPNT…EGSS) and 1027–1040 (TAAG…AGRT). The segment covering 1053–1065 (RRPSASSPNNNTA) has biased composition (polar residues). Serine 1056 is subject to Phosphoserine; by PKA.

Belongs to the JHDM1 histone demethylase family. JHDM1D subfamily. In terms of assembly, component of the PHF2-ARID5B complex, at least composed of PHF2 and ARID5B. Interacts with HNF4A and NR1H4. Interacts with RELA. Phosphorylated by PKA on specific serine residues, leading to the formation of an active lysine demethylase complex. Widely expressed, including in liver (at protein level).

The protein localises to the nucleus. It localises to the nucleolus. Its subcellular location is the chromosome. The protein resides in the centromere. It is found in the kinetochore. It catalyses the reaction N(6),N(6)-dimethyl-L-lysyl(9)-[histone H3] + 2-oxoglutarate + O2 = N(6)-methyl-L-lysyl(9)-[histone H3] + formaldehyde + succinate + CO2. Enzymatically inactive by itself, and become active following phosphorylation by PKA. Functionally, lysine demethylase that demethylates both histones and non-histone proteins. Enzymatically inactive by itself, and becomes active following phosphorylation by PKA: forms a complex with ARID5B and mediates demethylation of methylated ARID5B. Demethylation of ARID5B leads to target the PHF2-ARID5B complex to target promoters, where PHF2 mediates demethylation of dimethylated 'Lys-9' of histone H3 (H3K9me2), followed by transcription activation of target genes. The PHF2-ARID5B complex acts as a coactivator of HNF4A in liver. PHF2 is recruited to trimethylated 'Lys-4' of histone H3 (H3K4me3) at rDNA promoters and promotes expression of rDNA. Involved in the activation of toll-like receptor 4 (TLR4)-target inflammatory genes in macrophages by catalyzing the demethylation of trimethylated histone H4 lysine 20 (H4K20me3) at the gene promoters. In Homo sapiens (Human), this protein is Lysine-specific demethylase PHF2.